Consider the following 537-residue polypeptide: Multidrug resistance protein Stp (537 aa).

Transmembrane regions (helical) follow at residues 6–26, 46–66, 77–97, 104–124, 136–156, 163–183, 200–220, 223–243, 262–282, 300–320, 327–347, 352–372, 397–417, and 478–498; these read LLTL…ALIV, WVVA…ATLA, IGVS…SIAV, AQGL…SAAF, IWTA…GLLV, SIFY…LCYV, LLFI…PQIG, SVQT…FVWL, YALA…MLLL, LMIL…GHLV, VPIL…IFSE, ALVL…LTPI, AIGS…WLSA, and VALL…WRWF.

Belongs to the major facilitator superfamily. EmrB family.

The protein localises to the cell membrane. The polypeptide is Multidrug resistance protein Stp (stp) (Mycobacterium tuberculosis (strain CDC 1551 / Oshkosh)).